We begin with the raw amino-acid sequence, 309 residues long: Olfactory receptor 7A40 (309 aa).

Over M1–F26 the chain is Extracellular. An N-linked (GlcNAc...) asparagine glycan is attached at N5. Residues L27 to I47 traverse the membrane as a helical segment. The Cytoplasmic portion of the chain corresponds to A48–T57. The helical transmembrane segment at P58–I78 threads the bilayer. Residues P79–C97 lie on the Extracellular side of the membrane. A disulfide bond links C97 and C179. A helical membrane pass occupies residues I98–M118. The Cytoplasmic portion of the chain corresponds to A119 to R139. The helical transmembrane segment at L140–S160 threads the bilayer. The Extracellular portion of the chain corresponds to S161–D196. The chain crosses the membrane as a helical span at residues M197–S217. The Cytoplasmic segment spans residues Y218 to H244. Residues L245 to T265 traverse the membrane as a helical segment. Residues Q266–H269 are Extracellular-facing. Residues S270 to L292 form a helical membrane-spanning segment. The Cytoplasmic portion of the chain corresponds to R293–S309.

It belongs to the G-protein coupled receptor 1 family.

The protein resides in the cell membrane. Functionally, odorant receptor. In Mus musculus (Mouse), this protein is Olfactory receptor 7A40.